The primary structure comprises 199 residues: MALQSEEKLEVGYSSLQPKTRKWVLLMLRVLAFFATAAATVVMGLNKETKTLVVATVGSTPIKASLAAKFQHTPAFVFFVIANGLASIHNLVMIMGDLFGQKLDYKGLRLAMIAILDMMTVALVSGGVSAAAFMAELGKNGNSHARWNKICDKFETFCDHGGGALIASFAGLILMLIISVMSIIKLLIKPKPDSTIVVP.

At 1–22 the chain is on the cytoplasmic side; that stretch reads MALQSEEKLEVGYSSLQPKTRK. Residues 23 to 43 form a helical membrane-spanning segment; it reads WVLLMLRVLAFFATAAATVVM. Residues 44-74 are Extracellular-facing; that stretch reads GLNKETKTLVVATVGSTPIKASLAAKFQHTP. Residues 75-95 form a helical membrane-spanning segment; it reads AFVFFVIANGLASIHNLVMIM. Over 96 to 112 the chain is Cytoplasmic; sequence GDLFGQKLDYKGLRLAM. A helical transmembrane segment spans residues 113 to 133; that stretch reads IAILDMMTVALVSGGVSAAAF. Residues 134–163 lie on the Extracellular side of the membrane; the sequence is MAELGKNGNSHARWNKICDKFETFCDHGGG. A helical membrane pass occupies residues 164–184; it reads ALIASFAGLILMLIISVMSII. Residues 185–199 lie on the Cytoplasmic side of the membrane; sequence KLLIKPKPDSTIVVP.

This sequence belongs to the Casparian strip membrane proteins (CASP) family. Homodimer and heterodimers.

The protein localises to the cell membrane. The sequence is that of CASP-like protein 1B2 from Populus trichocarpa (Western balsam poplar).